The primary structure comprises 213 residues: G2/mitotic-specific cyclin-1 (213 aa).

The tract at residues 1–23 (MKFSEEKNVSNNPTNFEGGLDSR) is disordered.

It belongs to the cyclin family. Cyclin AB subfamily. In terms of assembly, interacts with the CDC2 protein kinase to form a serine/threonine kinase holoenzyme complex also known as maturation promoting factor (MPF). The cyclin subunit imparts substrate specificity to the complex. As to expression, only expressed in organs with dividing cells.

Functionally, essential for the control of the cell cycle at the G2/M (mitosis) transition. The polypeptide is G2/mitotic-specific cyclin-1 (Medicago sativa (Alfalfa)).